Here is an 84-residue protein sequence, read N- to C-terminus: Small ribosomal subunit protein bS16 (84 aa).

The protein belongs to the bacterial ribosomal protein bS16 family.

The protein is Small ribosomal subunit protein bS16 of Methylococcus capsulatus (strain ATCC 33009 / NCIMB 11132 / Bath).